Here is a 198-residue protein sequence, read N- to C-terminus: Probable GTP-binding protein EngB (198 aa).

Positions 22-195 constitute an EngB-type G domain; that stretch reads HRNEVAFVGR…IDKLFLEFAT (174 aa). GTP is bound by residues 30–37, 57–61, 75–78, 142–145, and 174–176; these read GRSNVGKS, GKTRL, DLPG, TKSD, and YSS. Residues Ser-37 and Thr-59 each coordinate Mg(2+).

The protein belongs to the TRAFAC class TrmE-Era-EngA-EngB-Septin-like GTPase superfamily. EngB GTPase family. Mg(2+) is required as a cofactor.

Its function is as follows. Necessary for normal cell division and for the maintenance of normal septation. The protein is Probable GTP-binding protein EngB of Clostridium botulinum (strain Eklund 17B / Type B).